We begin with the raw amino-acid sequence, 29 residues long: Kalata-B15 (29 aa).

The cyclopeptide (Gly-Asp) cross-link spans 1-29 (GLPVCGESCFGGSCYTPGCSCTWPICTRD). 3 cysteine pairs are disulfide-bonded: Cys5–Cys19, Cys9–Cys21, and Cys14–Cys26.

This is a cyclic peptide.

Functionally, probably participates in a plant defense mechanism. This chain is Kalata-B15, found in Oldenlandia affinis.